We begin with the raw amino-acid sequence, 627 residues long: (-)-beta-pinene synthase 2, chloroplastic (627 aa).

Residues 1-51 constitute a chloroplast transit peptide; the sequence is MDLISVLPSASKSCVCLHKPLSSSTHKLKPFCRKIRILGMPRPRKSVLMVS. Mg(2+) contacts are provided by Asp378, Asp382, and Asp530. Residues 378 to 382 carry the DDXXD motif motif; the sequence is DDMYD.

This sequence belongs to the terpene synthase family. Tpsd subfamily. Mg(2+) serves as cofactor. Requires Mn(2+) as cofactor.

Its subcellular location is the plastid. It localises to the chloroplast. It catalyses the reaction (2E)-geranyl diphosphate = (1S,5S)-beta-pinene + diphosphate. The enzyme catalyses (2E)-geranyl diphosphate = (1S,5S)-alpha-pinene + diphosphate. It participates in terpene metabolism; oleoresin biosynthesis. The protein operates within secondary metabolite biosynthesis; terpenoid biosynthesis. Monoterpene synthase (TPS) involved in the biosynthesis of monoterpene natural products included in conifer oleoresin secretions and volatile emissions; these compounds contribute to biotic and abiotic stress defense against herbivores and pathogens. Catalyzes the conversion of (2E)-geranyl diphosphate (GPP) to (-)-beta-pinene and, to a lower extent, to (-)-alpha-pinene. The chain is (-)-beta-pinene synthase 2, chloroplastic from Pinus banksiana (Jack pine).